The sequence spans 822 residues: MNGHISNHPSSFGMYPSQMNGYGSSPTFSQTDREHGSKTSAKALYEQRKNYARDSVSSVSDISQYRVEHLTTFVLDRKDAMITVDDGIRKLKLLDAKGKVWTQDMILQVDDRAVSLIDLESKNELENFPLNTIQHCQAVMHSCSYDSVLALVCKEPTQNKPDLHLFQCDEVKANLISEDIESAISDSKGGKQKRRPDALRMISNADPSIPPPPRAPAPAPPGTVTQVDVRSRVAAWSAWAADQGDFEKPRQYHEQEETPEMMAARIDRDVQILNHILDDIEFFITKLQKAAEAFSELSKRKKNKKGKRKGPGEGVLTLRAKPPPPDEFLDCFQKFKHGFNLLAKLKSHIQNPSAADLVHFLFTPLNMVVQATGGPELASSVLSPLLNKDTIDFLNYTVNGDERQLWMSLGGTWMKARAEWPKEQFIPPYVPRFRNGWEPPMLNFMGATMEQDLYQLAESVANVAEHQRKQEIKRLSTEHSSVSEYHPADGYAFSSNIYTRGSHLDQGEAAVAFKPTSNRHIDRNYEPLKTQPKKYAKSKYDFVARNNSELSVLKDDILEILDDRKQWWKVRNASGDSGFVPNNILDIVRPPESGLGRADPPYTHTIQKQRMEYGPRPADTPPAPSPPPTPAPVPVPLPPSTPAPVPVSKVPANITRQNSSSSDSGGSIVRDSQRHKQLPVDRRKSQMEEVQDELIHRLTIGRSAAQKKFHVPRQNVPVINITYDSTPEDVKTWLQSKGFNPVTVNSLGVLNGAQLFSLNKDELRTVCPEGARVYSQITVQKAALEDSSGSSELQEIMRRRQEKISAAASDSGVESFDEGSSH.

Composition is skewed to polar residues over residues 1 to 10 and 17 to 30; these read MNGHISNHPS and SQMN…TFSQ. Positions 1–39 are disordered; that stretch reads MNGHISNHPSSFGMYPSQMNGYGSSPTFSQTDREHGSKT. Residue Ser58 is modified to Phosphoserine. In terms of domain architecture, PTB spans 64–194; that stretch reads QYRVEHLTTF…SDSKGGKQKR (131 aa). 2 disordered regions span residues 202–225 and 298–320; these read ISNA…GTVT and SKRK…TLRA. Over residues 208–221 the composition is skewed to pro residues; the sequence is SIPPPPRAPAPAPP. Position 223 is a phosphothreonine (Thr223). Residues 299–309 show a composition bias toward basic residues; that stretch reads KRKKNKKGKRK. At Thr317 the chain carries Phosphothreonine. The residue at position 476 (Ser476) is a Phosphoserine. In terms of domain architecture, SH3 spans 531–590; sequence QPKKYAKSKYDFVARNNSELSVLKDDILEILDDRKQWWKVRNASGDSGFVPNNILDIVRP. Positions 612–689 are disordered; it reads EYGPRPADTP…VDRRKSQMEE (78 aa). Residues 618–645 show a composition bias toward pro residues; it reads ADTPPAPSPPPTPAPVPVPLPPSTPAPV. Residue Ser625 is modified to Phosphoserine. Phosphothreonine; by MAPK is present on Thr629. Positions 649–822 are effector region; sequence KVPANITRQN…VESFDEGSSH (174 aa). A phosphoserine mark is found at Ser659, Ser662, and Ser685. The segment covering 671–687 has biased composition (basic and acidic residues); the sequence is DSQRHKQLPVDRRKSQM. The tract at residues 680–698 is amphipathic helix; sequence VDRRKSQMEEVQDELIHRL. 4 helix bundle regions span residues 718–738, 752–757, 762–767, and 766–785; these read VINI…QSKG, GAQLFS, ELRTVC, and VCPE…AALE. The segment at 787-822 is disordered; it reads SSGSSELQEIMRRRQEKISAAASDSGVESFDEGSSH. Ser811 and Ser815 each carry phosphoserine.

Belongs to the EPS8 family. Homodimer. Part of a complex consisting of ABI1, EPS8 and SOS1. Interacts with MYO15A and WHRN. Interacts with LANCL1. Interacts with EGFR; mediates EPS8 phosphorylation. Interacts with BAIAP2. Interacts with SHB. Ubiquitinated by the SCF(FBXW5) E3 ubiquitin-protein ligase complex during G2 phase, leading to its transient degradation and subsequent cell shape changes required to allow mitotic progression. Reappears at the midzone of dividing cells. In terms of processing, phosphorylation at Ser-625 and Thr-629 by MAPK following BDNF treatment promotes removal from actin and filopodia formation. Phosphorylated by several receptor tyrosine kinases. Expressed in all tissues analyzed, including heart, brain, placenta, lung, liver, skeletal muscle, kidney and pancreas. Expressed in all epithelial and fibroblastic lines examined and in some, but not all, hematopoietic cells.

It is found in the cytoplasm. The protein resides in the cell cortex. Its subcellular location is the cell projection. The protein localises to the ruffle membrane. It localises to the growth cone. It is found in the stereocilium. The protein resides in the synapse. Its subcellular location is the synaptosome. Functionally, signaling adapter that controls various cellular protrusions by regulating actin cytoskeleton dynamics and architecture. Depending on its association with other signal transducers, can regulate different processes. Together with SOS1 and ABI1, forms a trimeric complex that participates in transduction of signals from Ras to Rac by activating the Rac-specific guanine nucleotide exchange factor (GEF) activity. Acts as a direct regulator of actin dynamics by binding actin filaments and has both barbed-end actin filament capping and actin bundling activities depending on the context. Displays barbed-end actin capping activity when associated with ABI1, thereby regulating actin-based motility process: capping activity is auto-inhibited and inhibition is relieved upon ABI1 interaction. Also shows actin bundling activity when associated with BAIAP2, enhancing BAIAP2-dependent membrane extensions and promoting filopodial protrusions. Involved in the regulation of processes such as axonal filopodia growth, stereocilia length, dendritic cell migration and cancer cell migration and invasion. Acts as a regulator of axonal filopodia formation in neurons: in the absence of neurotrophic factors, negatively regulates axonal filopodia formation via actin-capping activity. In contrast, it is phosphorylated in the presence of BDNF leading to inhibition of its actin-capping activity and stimulation of filopodia formation. Component of a complex with WHRN and MYO15A that localizes at stereocilia tips and is required for elongation of the stereocilia actin core. Indirectly involved in cell cycle progression; its degradation following ubiquitination being required during G2 phase to promote cell shape changes. The sequence is that of Epidermal growth factor receptor kinase substrate 8 (EPS8) from Homo sapiens (Human).